Consider the following 194-residue polypeptide: ATP-dependent Clp protease proteolytic subunit (194 aa).

The Nucleophile role is filled by S98. H123 is an active-site residue.

It belongs to the peptidase S14 family. As to quaternary structure, fourteen ClpP subunits assemble into 2 heptameric rings which stack back to back to give a disk-like structure with a central cavity, resembling the structure of eukaryotic proteasomes.

It localises to the cytoplasm. The catalysed reaction is Hydrolysis of proteins to small peptides in the presence of ATP and magnesium. alpha-casein is the usual test substrate. In the absence of ATP, only oligopeptides shorter than five residues are hydrolyzed (such as succinyl-Leu-Tyr-|-NHMec, and Leu-Tyr-Leu-|-Tyr-Trp, in which cleavage of the -Tyr-|-Leu- and -Tyr-|-Trp bonds also occurs).. Its function is as follows. Cleaves peptides in various proteins in a process that requires ATP hydrolysis. Has a chymotrypsin-like activity. Plays a major role in the degradation of misfolded proteins. The polypeptide is ATP-dependent Clp protease proteolytic subunit (Staphylococcus epidermidis (strain ATCC 35984 / DSM 28319 / BCRC 17069 / CCUG 31568 / BM 3577 / RP62A)).